The primary structure comprises 337 residues: Putative carbonic anhydrase-like protein 2 (337 aa).

The signal sequence occupies residues 1 to 16; sequence MIPWLLTACIYPCVIG. The region spanning 17–274 is the Alpha-carbonic anhydrase domain; that stretch reads PDFWGLLHGD…LNGRLVRTNI (258 aa). Tyrosine 140 is an active-site residue. N-linked (GlcNAc...) asparagine glycosylation is present at asparagine 188. Substrate is bound at residue 212–213; the sequence is TF.

It belongs to the alpha-carbonic anhydrase family.

The protein localises to the secreted. The polypeptide is Putative carbonic anhydrase-like protein 2 (cah-2) (Caenorhabditis elegans).